The sequence spans 209 residues: Large ribosomal subunit protein uL3 (209 aa).

An N5-methylglutamine modification is found at glutamine 150.

This sequence belongs to the universal ribosomal protein uL3 family. In terms of assembly, part of the 50S ribosomal subunit. Forms a cluster with proteins L14 and L19. In terms of processing, methylated by PrmB.

One of the primary rRNA binding proteins, it binds directly near the 3'-end of the 23S rRNA, where it nucleates assembly of the 50S subunit. The polypeptide is Large ribosomal subunit protein uL3 (Cronobacter sakazakii (strain ATCC BAA-894) (Enterobacter sakazakii)).